Consider the following 149-residue polypeptide: 3-dehydroquinate dehydratase (149 aa).

Y23 acts as the Proton acceptor in catalysis. Substrate-binding residues include N75, H81, and D88. H101 serves as the catalytic Proton donor. Substrate-binding positions include 102–103 and R112; that span reads MS.

Belongs to the type-II 3-dehydroquinase family. As to quaternary structure, homododecamer.

The enzyme catalyses 3-dehydroquinate = 3-dehydroshikimate + H2O. It participates in metabolic intermediate biosynthesis; chorismate biosynthesis; chorismate from D-erythrose 4-phosphate and phosphoenolpyruvate: step 3/7. Catalyzes a trans-dehydration via an enolate intermediate. The polypeptide is 3-dehydroquinate dehydratase (Pelobacter propionicus (strain DSM 2379 / NBRC 103807 / OttBd1)).